The primary structure comprises 162 residues: Protein snakeskin (162 aa).

At 2–6 (VSVET) the chain is on the cytoplasmic side. Residues 7–27 (VGSIFIKALKLIINLVIIFLY) traverse the membrane as a helical segment. Over 28–53 (RWGDGGEFLGIGGTWNLNEEKSADAE) the chain is Extracellular. The helical transmembrane segment at 54-74 (IVASGVMVGFLIYTGCHTIAF) threads the bilayer. The Cytoplasmic segment spans residues 75–88 (AFGTTKHKGELCDT). The chain crosses the membrane as a helical span at residues 89–109 (IMNVVGCIMWIAVGGVALHYW). Topologically, residues 110–128 (KGYMSDEGFLYVNSERQVG) are extracellular. The helical transmembrane segment at 129–149 (IAMGSLCVIEGALYLLDTVLA) threads the bilayer. The Cytoplasmic segment spans residues 150–162 (CIHYSKGDTDYTQ).

As to quaternary structure, forms a complex with Tsp2A and mesh. Interacts with mesh; the interaction may be necessary for the localization of both proteins to the cell apicolateral region.

It is found in the apicolateral cell membrane. Its subcellular location is the cell junction. It localises to the septate junction. In terms of biological role, required for assembly of smooth septate junctions (sSJs), together with mesh and Tsp2A. May be important for barrier function of the midgut epithelium. The chain is Protein snakeskin from Drosophila melanogaster (Fruit fly).